The sequence spans 387 residues: Glutamate N-acetyltransferase (387 aa).

Substrate is bound by residues threonine 140, lysine 162, threonine 173, glutamate 257, asparagine 382, and threonine 387. Threonine 173 functions as the Nucleophile in the catalytic mechanism.

It belongs to the ArgJ family. In terms of assembly, heterotetramer of two alpha and two beta chains.

Its subcellular location is the cytoplasm. The enzyme catalyses N(2)-acetyl-L-ornithine + L-glutamate = N-acetyl-L-glutamate + L-ornithine. The protein operates within amino-acid biosynthesis; L-arginine biosynthesis; L-ornithine and N-acetyl-L-glutamate from L-glutamate and N(2)-acetyl-L-ornithine (cyclic): step 1/1. Functionally, catalyzes the transfer of the acetyl group from N(2)-acetylornithine to glutamate, forming N-acetylglutamate and L-ornithine. In Methanopyrus kandleri (strain AV19 / DSM 6324 / JCM 9639 / NBRC 100938), this protein is Glutamate N-acetyltransferase.